A 373-amino-acid polypeptide reads, in one-letter code: Ubiquitin domain-containing protein DSK2 (373 aa).

The Ubiquitin-like domain occupies 1–76 (MSLNIHIKSG…SVHLVKSQPK (76 aa)). Residues lysine 13 and lysine 76 each participate in a glycyl lysine isopeptide (Lys-Gly) (interchain with G-Cter in ubiquitin) cross-link. Positions 221–270 (DPNAGMGSAGGAASAFPAPGGDAPEEGSNTNTTSSSNTGNNAGTNAGTNA) are disordered. Residues 231 to 270 (GAASAFPAPGGDAPEEGSNTNTTSSSNTGNNAGTNAGTNA) are compositionally biased toward low complexity. Residues 327–371 (PPEERYEHQLRQLNDMGFFDFDRNVAALRRSGGSVQGALDSLLNG) enclose the UBA domain.

It localises to the nucleus. Its function is as follows. Involved, with RAD23 in spindle pole body duplication. Involved in the ubiquitin-proteasome proteolytic pathway. The sequence is that of Ubiquitin domain-containing protein DSK2 (DSK2) from Saccharomyces cerevisiae (strain ATCC 204508 / S288c) (Baker's yeast).